Reading from the N-terminus, the 339-residue chain is tRNA N6-adenosine threonylcarbamoyltransferase (339 aa).

Residues H111 and H115 each contribute to the Fe cation site. Substrate-binding positions include 139 to 143, D172, G185, D189, and N280; that span reads LVSGG. D308 contributes to the Fe cation binding site.

The protein belongs to the KAE1 / TsaD family. It depends on Fe(2+) as a cofactor.

It localises to the cytoplasm. It carries out the reaction L-threonylcarbamoyladenylate + adenosine(37) in tRNA = N(6)-L-threonylcarbamoyladenosine(37) in tRNA + AMP + H(+). Functionally, required for the formation of a threonylcarbamoyl group on adenosine at position 37 (t(6)A37) in tRNAs that read codons beginning with adenine. Is involved in the transfer of the threonylcarbamoyl moiety of threonylcarbamoyl-AMP (TC-AMP) to the N6 group of A37, together with TsaE and TsaB. TsaD likely plays a direct catalytic role in this reaction. The protein is tRNA N6-adenosine threonylcarbamoyltransferase of Bacteroides fragilis (strain ATCC 25285 / DSM 2151 / CCUG 4856 / JCM 11019 / LMG 10263 / NCTC 9343 / Onslow / VPI 2553 / EN-2).